Reading from the N-terminus, the 581-residue chain is FAD-linked oxidoreductase easE (581 aa).

An N-terminal signal peptide occupies residues 1-25 (MYRLLGPLACLALAWFFTWAPSGRC). Asn44 and Asn73 each carry an N-linked (GlcNAc...) asparagine glycan. Residues 122-306 (HQGRIPLYSA…AQATIRVFPD (185 aa)) form the FAD-binding PCMH-type domain. Asn369 carries an N-linked (GlcNAc...) asparagine glycan.

The protein belongs to the oxygen-dependent FAD-linked oxidoreductase family. The cofactor is FAD.

It participates in alkaloid biosynthesis; ergot alkaloid biosynthesis. Its function is as follows. FAD-linked oxidoreductase; part of the gene cluster that mediates the biosynthesis of fungal ergot alkaloid. DmaW catalyzes the first step of ergot alkaloid biosynthesis by condensing dimethylallyl diphosphate (DMAP) and tryptophan to form 4-dimethylallyl-L-tryptophan. The second step is catalyzed by the methyltransferase easF that methylates 4-dimethylallyl-L-tryptophan in the presence of S-adenosyl-L-methionine, resulting in the formation of 4-dimethylallyl-L-abrine. The catalase easC and the FAD-dependent oxidoreductase easE then transform 4-dimethylallyl-L-abrine to chanoclavine-I which is further oxidized by easD in the presence of NAD(+), resulting in the formation of chanoclavine-I aldehyde. Agroclavine dehydrogenase easG then mediates the conversion of chanoclavine-I aldehyde to agroclavine via a non-enzymatic adduct reaction: the substrate is an iminium intermediate that is formed spontaneously from chanoclavine-I aldehyde in the presence of glutathione. Further conversion of agroclavine to paspalic acid is a two-step process involving oxidation of agroclavine to elymoclavine and of elymoclavine to paspalic acid, the second step being performed by the elymoclavine oxidase cloA. However, cloA does not encode a functional enzyme indicating that C.fusiformis terminates its ergot alkaloid pathway at elymoclavine. This chain is FAD-linked oxidoreductase easE, found in Claviceps fusiformis (Ergot fungus).